The primary structure comprises 559 residues: Regulatory protein PHO2 (559 aa).

4 disordered regions span residues 16 to 88, 132 to 158, 293 to 333, and 534 to 559; these read ATDL…KGEA, LRKKQHGSNKDTIPSSQSRDIANDYDR, INSN…AKDN, and PTDSELPNTPDFLKNTNELTDEHRWI. Low complexity-rich tracts occupy residues 24 to 52 and 63 to 74; these read HDQQQQQQQQHDQQHNQQQQPQPQPIQTQ and NDMSASSNASDS. A DNA-binding region (homeobox) is located at residues 77–136; it reads QRPKRTRAKGEALDVLKRKFEINPTPSLVERKKISDLIGMPEKNVRIWFQNRRAKLRKKQ. A compositionally biased stretch (polar residues) spans 141 to 151; the sequence is KDTIPSSQSRD. Over residues 293-307 the composition is skewed to low complexity; the sequence is INSNNTSDKNNSNTN. Acidic residues predominate over residues 308 to 323; it reads NDDDNDDNSNEDNDNS. Residues 324 to 333 show a composition bias toward basic and acidic residues; it reads SEDKRNAKDN. T542 carries the phosphothreonine modification.

It localises to the nucleus. In terms of biological role, regulator in phosphate metabolism and acts as a derepressor of another central regulator PHO5. Binds to the upstream activator sequence (UAS) of PHO5. It also binds to the TRP4, HIS4, and CYC1 promoters. The sequence is that of Regulatory protein PHO2 (PHO2) from Saccharomyces cerevisiae (strain ATCC 204508 / S288c) (Baker's yeast).